Here is a 120-residue protein sequence, read N- to C-terminus: Ribosome-binding factor A (120 aa).

This sequence belongs to the RbfA family. As to quaternary structure, monomer. Binds 30S ribosomal subunits, but not 50S ribosomal subunits or 70S ribosomes.

Its subcellular location is the cytoplasm. Its function is as follows. One of several proteins that assist in the late maturation steps of the functional core of the 30S ribosomal subunit. Associates with free 30S ribosomal subunits (but not with 30S subunits that are part of 70S ribosomes or polysomes). Required for efficient processing of 16S rRNA. May interact with the 5'-terminal helix region of 16S rRNA. The polypeptide is Ribosome-binding factor A (Chlamydia felis (strain Fe/C-56) (Chlamydophila felis)).